The following is a 309-amino-acid chain: Mitochondrial succinate-fumarate transporter 1 (309 aa).

Solcar repeat units lie at residues I11 to A96, R108 to L196, and L208 to L298. The next 6 membrane-spanning stretches (helical) occupy residues A17–I37, V65–L85, F111–V131, G171–N191, M214–V234, and G273–D293.

The protein belongs to the mitochondrial carrier (TC 2.A.29) family. Expressed in root tips, cotyledons, hypocotyls, leaves, trichomes, stems, flowers, carpels, anthers, pollen and abscission zone of siliques.

It is found in the mitochondrion inner membrane. Its function is as follows. May transport cytoplasmic succinate, derived from fatty acid oxidation, into the mitochondrial matrix in exchange of fumarate during lipid mobilization in seed germination. Conversion of seed-reserved triacylglycerols into sucrose is necessary for growth before the onset of photosynthesis and involves fatty acid beta-oxidation, the glyoxylate cycle and gluconeogenesis. The sequence is that of Mitochondrial succinate-fumarate transporter 1 (SFC1) from Arabidopsis thaliana (Mouse-ear cress).